Here is an 856-residue protein sequence, read N- to C-terminus: Envelope glycoprotein gp150 (856 aa).

The Extracellular portion of the chain corresponds to 1–785 (MAEGFAANRQ…WIGNIPQYLK (785 aa)). Asn-220, Asn-258, Asn-269, Asn-274, Asn-298, Asn-330, Asn-336, Asn-342, Asn-418, Asn-422, Asn-448, Asn-481, Asn-499, Asn-518, Asn-531, Asn-548, and Asn-551 each carry an N-linked (GlcNAc...) asparagine; by host glycan. A fusion peptide region spans residues 616–636 (VMLALATVLSIAGAGTGATAI). A coiled-coil region spans residues 643–693 (HQVLATHQEAIEKVTGALKINNLRLVTLEHQVLVIGLKVEAMEKFLYTAFA). An immunosuppression region spans residues 662–680 (INNLRLVTLEHQVLVIGLK). 4 N-linked (GlcNAc...) asparagine; by host glycosylation sites follow: Asn-717, Asn-721, Asn-729, and Asn-737. A coiled-coil region spans residues 736-772 (YNQTKDLQQKFYEIIMDIEQNNVQGKTGIQQLQKWED). A helical transmembrane segment spans residues 786–806 (GLLGGILGIGLGVLLLILCLP). At 807–856 (TLVDCIRNCIHKILGYTVIAMPEVEGEEIQPQMELRRNGRQCGMSEKEEE) the chain is on the cytoplasmic side.

As to quaternary structure, the mature envelope protein (Env) consists of a trimer of SU-TM heterodimers attached by noncovalent interactions or by a labile interchain disulfide bond. Post-translationally, specific enzymatic cleavages in vivo yield mature proteins. Envelope glycoproteins are synthesized as an inactive precursor that is N-glycosylated and processed likely by host cell furin or by a furin-like protease in the Golgi to yield the mature SU and TM proteins. The cleavage site between SU and TM requires the minimal sequence [KR]-X-[KR]-R.

It localises to the virion membrane. The protein resides in the host cell membrane. The surface protein (SU) attaches the virus to the host cell by binding to its receptor. This interaction triggers the refolding of the transmembrane protein (TM) and is thought to activate its fusogenic potential by unmasking its fusion peptide. Fusion occurs at the host cell plasma membrane. Functionally, the transmembrane protein (TM) acts as a class I viral fusion protein. Under the current model, the protein has at least 3 conformational states: pre-fusion native state, pre-hairpin intermediate state, and post-fusion hairpin state. During viral and target cell membrane fusion, the coiled coil regions (heptad repeats) assume a trimer-of-hairpins structure, positioning the fusion peptide in close proximity to the C-terminal region of the ectodomain. The formation of this structure appears to drive apposition and subsequent fusion of viral and target cell membranes. Membranes fusion leads to delivery of the nucleocapsid into the cytoplasm. This chain is Envelope glycoprotein gp150 (env), found in Felidae (cat family).